A 218-amino-acid chain; its full sequence is MSSKPVLGYWDIRGLAQPIRLLLAYLDVDYEDKRYQLGANFDRSAWLTEKFNLGLDFPNLPYYIDGNVKLSQTLAILRYIGRKYKLTGANEPEELRVSLVEQQVVDGNQSLSRVAYDPNADKLKPDFLKTLPDSVKQLSHFLGNSPFVAGTSITYVDFWLYEYLVKLSVLVPEVFGQFDNLKKFVERIESLPRVSVYIKAQQPKLFNGPMAKWNGQYA.

One can recognise a GST N-terminal domain in the interval 3 to 88 (SKPVLGYWDI…YIGRKYKLTG (86 aa)). Glutathione-binding positions include 9–10 (YW), 43–46 (RSAW), Lys50, 59–60 (NL), and 72–73 (QT). The region spanning 90-206 (NEPEELRVSL…YIKAQQPKLF (117 aa)) is the GST C-terminal domain. Tyr116 is a binding site for substrate.

The protein belongs to the GST superfamily. Mu family.

The catalysed reaction is RX + glutathione = an S-substituted glutathione + a halide anion + H(+). In terms of biological role, conjugation of reduced glutathione to a wide number of exogenous and endogenous hydrophobic electrophiles. This chain is Glutathione S-transferase, found in Tyrophagus putrescentiae (Mold mite).